The chain runs to 592 residues: Tegument protein US23 (592 aa).

The disordered stretch occupies residues 407-491 (PRSLGDGEEE…NNVVPNVERR (85 aa)). Positions 460-481 (ADDEEQGEDDDDSGAEPMEPEE) are enriched in acidic residues.

This sequence belongs to the herpesviridae US22 family.

The protein resides in the virion tegument. This Homo sapiens (Human) protein is Tegument protein US23 (US23).